A 74-amino-acid polypeptide reads, in one-letter code: Kappa-scoloptoxin(07)-Ssm2a (74 aa).

A signal peptide spans 1 to 19; it reads MLVFYALLFVTVFSNTVMG. Positions 20 to 41 are excised as a propeptide; that stretch reads ATIDKPIPKPILREAIEEIEVN.

This sequence belongs to the scoloptoxin-07 family. Contains 3 disulfide bonds. As to expression, expressed by the venom gland.

It is found in the secreted. In terms of biological role, toxin that inhibits voltage-gated potassium channel currents in DRG neurons (IC(50)=about 570 nM). In vivo, induces neurotoxicity shown by twitching, paralysis, and body contraction. In vivo, insects injected with this toxin showed signs of neurotoxicity including twitching, paralysis, and body contraction. In Scolopendra mutilans (Chinese red-headed centipede), this protein is Kappa-scoloptoxin(07)-Ssm2a.